The chain runs to 434 residues: Nicotinate phosphoribosyltransferase (434 aa).

A Phosphohistidine; by autocatalysis modification is found at His242.

It belongs to the NAPRTase family. In terms of processing, transiently phosphorylated on a His residue during the reaction cycle. Phosphorylation strongly increases the affinity for substrates and increases the rate of nicotinate D-ribonucleotide production. Dephosphorylation regenerates the low-affinity form of the enzyme, leading to product release.

The enzyme catalyses nicotinate + 5-phospho-alpha-D-ribose 1-diphosphate + ATP + H2O = nicotinate beta-D-ribonucleotide + ADP + phosphate + diphosphate. It functions in the pathway cofactor biosynthesis; NAD(+) biosynthesis; nicotinate D-ribonucleotide from nicotinate: step 1/1. Its function is as follows. Catalyzes the synthesis of beta-nicotinate D-ribonucleotide from nicotinate and 5-phospho-D-ribose 1-phosphate at the expense of ATP. The protein is Nicotinate phosphoribosyltransferase of Brucella abortus (strain S19).